The following is a 477-amino-acid chain: UDP-N-acetylmuramate--L-alanine ligase (477 aa).

122 to 128 (GTHGKTT) contributes to the ATP binding site.

It belongs to the MurCDEF family.

It localises to the cytoplasm. It carries out the reaction UDP-N-acetyl-alpha-D-muramate + L-alanine + ATP = UDP-N-acetyl-alpha-D-muramoyl-L-alanine + ADP + phosphate + H(+). It functions in the pathway cell wall biogenesis; peptidoglycan biosynthesis. Its function is as follows. Cell wall formation. The sequence is that of UDP-N-acetylmuramate--L-alanine ligase from Xylella fastidiosa (strain 9a5c).